A 392-amino-acid polypeptide reads, in one-letter code: Phosphoglycerate kinase (392 aa).

Residues 19–21 (DYN), arginine 34, 57–60 (HLGR), arginine 116, and arginine 149 contribute to the substrate site. Residues lysine 199, glutamate 321, and 347-350 (GGDS) contribute to the ATP site.

The protein belongs to the phosphoglycerate kinase family. In terms of assembly, monomer.

The protein localises to the cytoplasm. The catalysed reaction is (2R)-3-phosphoglycerate + ATP = (2R)-3-phospho-glyceroyl phosphate + ADP. It participates in carbohydrate degradation; glycolysis; pyruvate from D-glyceraldehyde 3-phosphate: step 2/5. This is Phosphoglycerate kinase from Thermomicrobium roseum (strain ATCC 27502 / DSM 5159 / P-2).